Reading from the N-terminus, the 558-residue chain is Dihydroxy-acid dehydratase (558 aa).

Cys54 is a [2Fe-2S] cluster binding site. Residue Asp86 participates in Mg(2+) binding. Cys127 contacts [2Fe-2S] cluster. The Mg(2+) site is built by Asp128 and Lys129. Position 129 is an N6-carboxylysine (Lys129). [2Fe-2S] cluster is bound at residue Cys199. Glu448 serves as a coordination point for Mg(2+). Ser474 serves as the catalytic Proton acceptor.

This sequence belongs to the IlvD/Edd family. In terms of assembly, homodimer. Requires [2Fe-2S] cluster as cofactor. The cofactor is Mg(2+).

It catalyses the reaction (2R)-2,3-dihydroxy-3-methylbutanoate = 3-methyl-2-oxobutanoate + H2O. The catalysed reaction is (2R,3R)-2,3-dihydroxy-3-methylpentanoate = (S)-3-methyl-2-oxopentanoate + H2O. The protein operates within amino-acid biosynthesis; L-isoleucine biosynthesis; L-isoleucine from 2-oxobutanoate: step 3/4. It participates in amino-acid biosynthesis; L-valine biosynthesis; L-valine from pyruvate: step 3/4. Functions in the biosynthesis of branched-chain amino acids. Catalyzes the dehydration of (2R,3R)-2,3-dihydroxy-3-methylpentanoate (2,3-dihydroxy-3-methylvalerate) into 2-oxo-3-methylpentanoate (2-oxo-3-methylvalerate) and of (2R)-2,3-dihydroxy-3-methylbutanoate (2,3-dihydroxyisovalerate) into 2-oxo-3-methylbutanoate (2-oxoisovalerate), the penultimate precursor to L-isoleucine and L-valine, respectively. This chain is Dihydroxy-acid dehydratase, found in Acidothermus cellulolyticus (strain ATCC 43068 / DSM 8971 / 11B).